Reading from the N-terminus, the 626-residue chain is Biosynthetic arginine decarboxylase (626 aa).

An N6-(pyridoxal phosphate)lysine modification is found at Lys-99. 279–289 (VDVGGGLGVDY) is a binding site for substrate.

It belongs to the Orn/Lys/Arg decarboxylase class-II family. SpeA subfamily. The cofactor is Mg(2+). Requires pyridoxal 5'-phosphate as cofactor.

The catalysed reaction is L-arginine + H(+) = agmatine + CO2. The protein operates within amine and polyamine biosynthesis; agmatine biosynthesis; agmatine from L-arginine: step 1/1. Catalyzes the biosynthesis of agmatine from arginine. The chain is Biosynthetic arginine decarboxylase from Chromobacterium violaceum (strain ATCC 12472 / DSM 30191 / JCM 1249 / CCUG 213 / NBRC 12614 / NCIMB 9131 / NCTC 9757 / MK).